The primary structure comprises 189 residues: Probable RNA 2'-phosphotransferase (189 aa).

The protein belongs to the KptA/TPT1 family.

Its function is as follows. Removes the 2'-phosphate from RNA via an intermediate in which the phosphate is ADP-ribosylated by NAD followed by a presumed transesterification to release the RNA and generate ADP-ribose 1''-2''-cyclic phosphate (APPR&gt;P). May function as an ADP-ribosylase. The sequence is that of Probable RNA 2'-phosphotransferase from Streptomyces griseus subsp. griseus (strain JCM 4626 / CBS 651.72 / NBRC 13350 / KCC S-0626 / ISP 5235).